A 258-amino-acid polypeptide reads, in one-letter code: Snake venom serine protease KN13 (258 aa).

Positions 1–18 (MVLIRVLANLLILQLSYA) are cleaved as a signal peptide. The propeptide occupies 19–24 (QRSSEL). In terms of domain architecture, Peptidase S1 spans 25 to 249 (VIGGDECNIN…HLDWIQNIIA (225 aa)). Disulfide bonds link cysteine 31–cysteine 163, cysteine 50–cysteine 66, cysteine 98–cysteine 256, cysteine 142–cysteine 210, cysteine 174–cysteine 189, and cysteine 200–cysteine 225. The active-site Charge relay system is histidine 65. N-linked (GlcNAc...) asparagine glycosylation occurs at asparagine 103. Aspartate 110 (charge relay system) is an active-site residue. N-linked (GlcNAc...) asparagine glycans are attached at residues asparagine 121, asparagine 122, asparagine 154, and asparagine 170. Serine 204 acts as the Charge relay system in catalysis. Asparagine 251 is a glycosylation site (N-linked (GlcNAc...) asparagine).

It belongs to the peptidase S1 family. Snake venom subfamily. As to quaternary structure, monomer. In terms of tissue distribution, expressed by the venom gland.

The protein resides in the secreted. Functionally, snake venom serine protease that may act in the hemostasis system of the prey. This chain is Snake venom serine protease KN13, found in Trimeresurus stejnegeri (Chinese green tree viper).